A 202-amino-acid polypeptide reads, in one-letter code: Holliday junction branch migration complex subunit RuvA (202 aa).

Residues 1 to 65 (MIAYVEGRVA…EDALELFGFS (65 aa)) form a domain I region. Residues 66-144 (TWDERQTFMV…VEDLPAGLVL (79 aa)) are domain II. Residues 145–155 (AGGAAPGGVFR) are flexible linker. A domain III region spans residues 155-202 (RDALAGLGNLGYLEDEAAPVLKEVLKAEPDLDVAGALRAALKALARGR).

The protein belongs to the RuvA family. Homotetramer. Forms an RuvA(8)-RuvB(12)-Holliday junction (HJ) complex. HJ DNA is sandwiched between 2 RuvA tetramers; dsDNA enters through RuvA and exits via RuvB. An RuvB hexamer assembles on each DNA strand where it exits the tetramer. Each RuvB hexamer is contacted by two RuvA subunits (via domain III) on 2 adjacent RuvB subunits; this complex drives branch migration. In the full resolvosome a probable DNA-RuvA(4)-RuvB(12)-RuvC(2) complex forms which resolves the HJ.

The protein resides in the cytoplasm. Functionally, the RuvA-RuvB-RuvC complex processes Holliday junction (HJ) DNA during genetic recombination and DNA repair, while the RuvA-RuvB complex plays an important role in the rescue of blocked DNA replication forks via replication fork reversal (RFR). RuvA specifically binds to HJ cruciform DNA, conferring on it an open structure. The RuvB hexamer acts as an ATP-dependent pump, pulling dsDNA into and through the RuvAB complex. HJ branch migration allows RuvC to scan DNA until it finds its consensus sequence, where it cleaves and resolves the cruciform DNA. The sequence is that of Holliday junction branch migration complex subunit RuvA from Nitratidesulfovibrio vulgaris (strain DSM 19637 / Miyazaki F) (Desulfovibrio vulgaris).